The chain runs to 321 residues: Probable nucleosome assembly protein (321 aa).

Over residues 272–298 (EENDYDFGEDFEDEEGEDDDEEDDEEE) the composition is skewed to acidic residues. The interval 272-321 (EENDYDFGEDFEDEEGEDDDEEDDEEEQTIKKPSGKGKAQPQQPQDCKQQ) is disordered. Over residues 311–321 (QPQQPQDCKQQ) the composition is skewed to low complexity.

The protein belongs to the nucleosome assembly protein (NAP) family.

It localises to the nucleus. In terms of biological role, may modulate chromatin structure by regulation of histone octamer formation. This is Probable nucleosome assembly protein (nap1) from Dictyostelium discoideum (Social amoeba).